The chain runs to 715 residues: Fatty acid oxidation complex subunit alpha (715 aa).

The segment at 1–190 (MTTTSAFMLN…KAGLVDDVVP (190 aa)) is enoyl-CoA hydratase. Residues 306–714 (GPLNSVGILG…FWTNGETDQG (409 aa)) form a 3-hydroxyacyl-CoA dehydrogenase region.

This sequence in the N-terminal section; belongs to the enoyl-CoA hydratase/isomerase family. It in the central section; belongs to the 3-hydroxyacyl-CoA dehydrogenase family. As to quaternary structure, heterotetramer of two alpha chains (FadJ) and two beta chains (FadI).

It is found in the cytoplasm. It catalyses the reaction a (3S)-3-hydroxyacyl-CoA = a (2E)-enoyl-CoA + H2O. The enzyme catalyses a 4-saturated-(3S)-3-hydroxyacyl-CoA = a (3E)-enoyl-CoA + H2O. The catalysed reaction is a (3S)-3-hydroxyacyl-CoA + NAD(+) = a 3-oxoacyl-CoA + NADH + H(+). It carries out the reaction (3S)-3-hydroxybutanoyl-CoA = (3R)-3-hydroxybutanoyl-CoA. The protein operates within lipid metabolism; fatty acid beta-oxidation. Its function is as follows. Catalyzes the formation of a hydroxyacyl-CoA by addition of water on enoyl-CoA. Also exhibits 3-hydroxyacyl-CoA epimerase and 3-hydroxyacyl-CoA dehydrogenase activities. This Salmonella paratyphi A (strain ATCC 9150 / SARB42) protein is Fatty acid oxidation complex subunit alpha.